Here is a 316-residue protein sequence, read N- to C-terminus: F-box protein At4g09920 (316 aa).

An F-box domain is found at 1–47; the sequence is MDRIIGLPDEVLVKILSFVPTKVAVSTSILSKRWEFLWMWLTKLKFG.

The protein is F-box protein At4g09920 of Arabidopsis thaliana (Mouse-ear cress).